The primary structure comprises 245 residues: tRNA pseudouridine synthase A (245 aa).

Asp52 serves as the catalytic Nucleophile. Residue Tyr111 participates in substrate binding.

This sequence belongs to the tRNA pseudouridine synthase TruA family. In terms of assembly, homodimer.

The enzyme catalyses uridine(38/39/40) in tRNA = pseudouridine(38/39/40) in tRNA. Formation of pseudouridine at positions 38, 39 and 40 in the anticodon stem and loop of transfer RNAs. In Zymomonas mobilis subsp. mobilis (strain ATCC 31821 / ZM4 / CP4), this protein is tRNA pseudouridine synthase A.